Reading from the N-terminus, the 330-residue chain is Zinc finger Ran-binding domain-containing protein 2 (330 aa).

The residue at position 9 (serine 9) is a Phosphoserine. Residues 9 to 40 (SDGDWICPDKKCGNVNFARRTSCNRCGREKTT) form a RanBP2-type 1 zinc finger. An N6-acetyllysine mark is found at lysine 18, lysine 54, and lysine 92. The RanBP2-type 2 zinc finger occupies 65–94 (SANDWQCKTCSNVNWARRSECNMCNTPKYA). The disordered stretch occupies residues 117–330 (REESDGEYDE…SGSRSSSKKK (214 aa)). Serine 120, serine 153, serine 181, serine 188, and serine 193 each carry phosphoserine. A compositionally biased stretch (acidic residues) spans 150 to 163 (DKESEGEEEDEDED). The tract at residues 151–324 (KESEGEEEDE…SSGSTHSGSR (174 aa)) is required for nuclear targeting. Residues 196-210 (KKSNRRSRSKSRSSH) are compositionally biased toward basic residues. 2 stretches are compositionally biased toward low complexity: residues 211–224 (SRSS…SSSR) and 232–242 (RSSSSSQSRSH). Composition is skewed to basic residues over residues 251–273 (SRGS…RKRS) and 297–314 (VRKK…HHRS). Low complexity predominate over residues 315 to 330 (SSGSTHSGSRSSSKKK).

The protein belongs to the ZRANB2 family. Interacts with the C-terminal half of SNRNP70, the Arg/Ser-rich domain of AKAP17A as well as with U2AF1 and CLK1.

It localises to the nucleus. Its function is as follows. Splice factor required for alternative splicing of TRA2B/SFRS10 transcripts. Binds to ssRNA containing the consensus sequence 5'-AGGUAA-3'. May interfere with constitutive 5'-splice site selection. The sequence is that of Zinc finger Ran-binding domain-containing protein 2 (Zranb2) from Mus musculus (Mouse).